Here is a 155-residue protein sequence, read N- to C-terminus: Large ribosomal subunit protein uL13 (155 aa).

The protein belongs to the universal ribosomal protein uL13 family. As to quaternary structure, part of the 50S ribosomal subunit.

Functionally, this protein is one of the early assembly proteins of the 50S ribosomal subunit, although it is not seen to bind rRNA by itself. It is important during the early stages of 50S assembly. The protein is Large ribosomal subunit protein uL13 of Rickettsia felis (strain ATCC VR-1525 / URRWXCal2) (Rickettsia azadi).